Consider the following 185-residue polypeptide: ADP-ribosylation factor (185 aa).

G2 carries N-myristoyl glycine lipidation. Residues 27 to 34 (GLDAAGKT), 70 to 74 (DVGGQ), and 129 to 132 (NKQD) each bind GTP.

The protein belongs to the small GTPase superfamily. Arf family.

The protein localises to the golgi apparatus. In terms of biological role, GTP-binding protein involved in protein trafficking; may modulate vesicle budding and uncoating within the Golgi apparatus. The protein is ADP-ribosylation factor of Neurospora crassa (strain ATCC 24698 / 74-OR23-1A / CBS 708.71 / DSM 1257 / FGSC 987).